The primary structure comprises 122 residues: Large ribosomal subunit protein uL14 (122 aa).

Belongs to the universal ribosomal protein uL14 family. In terms of assembly, part of the 50S ribosomal subunit. Forms a cluster with proteins L3 and L19. In the 70S ribosome, L14 and L19 interact and together make contacts with the 16S rRNA in bridges B5 and B8.

In terms of biological role, binds to 23S rRNA. Forms part of two intersubunit bridges in the 70S ribosome. In Pelagibacter ubique (strain HTCC1062), this protein is Large ribosomal subunit protein uL14.